A 350-amino-acid chain; its full sequence is Protein RecA (350 aa).

Position 65–72 (Gly-65–Thr-72) interacts with ATP. The segment at His-326–Lys-350 is disordered. The span at Gly-340–Lys-350 shows a compositional bias: basic and acidic residues.

This sequence belongs to the RecA family.

It is found in the cytoplasm. In terms of biological role, can catalyze the hydrolysis of ATP in the presence of single-stranded DNA, the ATP-dependent uptake of single-stranded DNA by duplex DNA, and the ATP-dependent hybridization of homologous single-stranded DNAs. It interacts with LexA causing its activation and leading to its autocatalytic cleavage. The protein is Protein RecA of Clostridium novyi (strain NT).